A 423-amino-acid polypeptide reads, in one-letter code: Peroxisomal membrane protein PMP47A (423 aa).

3 Solcar repeats span residues 6 to 120 (YDDL…TGKT), 142 to 230 (LSVW…LKSF), and 239 to 373 (ITPV…LLIL). Residues 12–32 (AFAGAGGGLLSMTLTYPLVTL) form a helical membrane-spanning segment. The span at 43–53 (KKDQEKEKENS) shows a compositional bias: basic and acidic residues. Residues 43–70 (KKDQEKEKENSNEDGSLSPKSSNTSDVS) form a disordered region. The segment covering 55-70 (EDGSLSPKSSNTSDVS) has biased composition (polar residues). The next 4 membrane-spanning stretches (helical) occupy residues 98 to 118 (SALFGIAVTNFVYYYFYELTG), 148 to 168 (MAAGAVAGTISRVATNPIWVA), 204 to 224 (FTGIVPALFLVLNPIIQYTIF), and 245 to 265 (LLLGAFGKLIATIITYPYITL). The segment at 278–308 (SEDVEKERTDSVQSLPEDGSDEDNLKENSAK) is disordered. A helical transmembrane segment spans residues 353-373 (LLQSILNAAFLFYFKEELLIL).

This sequence belongs to the mitochondrial carrier (TC 2.A.29) family.

It localises to the peroxisome membrane. Functionally, may have transport activity. In Candida boidinii (Yeast), this protein is Peroxisomal membrane protein PMP47A (PMP47A).